The primary structure comprises 311 residues: Metal-staphylopine import system permease protein CntB (311 aa).

6 consecutive transmembrane segments (helical) span residues 9-29 (IALM…LTYI), 105-125 (LTII…VVSA), 139-159 (VAFF…IIYV), 173-193 (GPES…GIYF), 237-257 (IFCM…YIFA), and 274-294 (FPVI…FNTL). In terms of domain architecture, ABC transmembrane type-1 spans 99 to 295 (FMNTLKLTII…VLFIVFNTLA (197 aa)).

The protein belongs to the binding-protein-dependent transport system permease family. The complex is composed of two ATP-binding proteins (CntD and CntF), two transmembrane proteins (CntB and CntC) and a solute-binding protein (CntA).

The protein resides in the cell membrane. In terms of biological role, part of the ABC transporter complex CntABCDF (Opp1) involved in the uptake of metal in complex with the metallophore staphylopine (StP). May be involved in the import of a large array of divalent metals ions such as nickel, cobalt, zinc, copper and iron. Probably responsible for the translocation of the substrate across the membrane. This is Metal-staphylopine import system permease protein CntB from Staphylococcus aureus (strain Mu50 / ATCC 700699).